A 570-amino-acid polypeptide reads, in one-letter code: Peptidyl-prolyl cis-trans isomerase-like 2 (570 aa).

In terms of domain architecture, U-box spans 37 to 110 (KRLPFNFCSL…GDYVDPVTYK (74 aa)). Disordered stretches follow at residues 215 to 253 (RSERAQRADSSAVTKKADGSTTTSTQSKTASFQSGKPTP), 428 to 449 (STTLNNLETHPVNSSTNRPTPD), and 469 to 570 (KKAE…SSWD). Low complexity predominate over residues 234–248 (STTTSTQSKTASFQS). One can recognise a PPIase cyclophilin-type domain in the interval 298–457 (QKGYARISTT…PDIRITDVTI (160 aa)). A compositionally biased stretch (polar residues) spans 428–446 (STTLNNLETHPVNSSTNRP). Over residues 469-483 (KKAEEASGKNKKVDP) the composition is skewed to basic and acidic residues. Acidic residues-rich tracts occupy residues 484 to 497 (TEEDRETQQEDDDQ) and 535 to 550 (QEEDEIVEFVDEEPEP).

This sequence belongs to the cyclophilin-type PPIase family. PPIL2 subfamily.

It localises to the nucleus. It carries out the reaction [protein]-peptidylproline (omega=180) = [protein]-peptidylproline (omega=0). The enzyme catalyses S-ubiquitinyl-[E2 ubiquitin-conjugating enzyme]-L-cysteine + [acceptor protein]-L-lysine = [E2 ubiquitin-conjugating enzyme]-L-cysteine + N(6)-ubiquitinyl-[acceptor protein]-L-lysine.. In terms of biological role, may catalyze the cis-trans isomerization of proline imidic peptide bonds in oligopeptides thereby assisting the folding of proteins. May also function as a chaperone, playing a role in intracellular transport of proteins. May also have a protein ubiquitin ligase activity acting as an E3 ubiquitin protein ligase or as a ubiquitin-ubiquitin ligase promoting elongation of ubiquitin chains on proteins. In Aspergillus oryzae (strain ATCC 42149 / RIB 40) (Yellow koji mold), this protein is Peptidyl-prolyl cis-trans isomerase-like 2 (cyp8).